We begin with the raw amino-acid sequence, 602 residues long: Elongation factor 4 (602 aa).

The tr-type G domain maps to 7-189 (SRIRNFSIIA…SIVQQVPPPA (183 aa)). Residues 19–24 (DHGKST) and 136–139 (NKID) each bind GTP.

The protein belongs to the TRAFAC class translation factor GTPase superfamily. Classic translation factor GTPase family. LepA subfamily.

The protein resides in the cell inner membrane. The catalysed reaction is GTP + H2O = GDP + phosphate + H(+). Its function is as follows. Required for accurate and efficient protein synthesis under certain stress conditions. May act as a fidelity factor of the translation reaction, by catalyzing a one-codon backward translocation of tRNAs on improperly translocated ribosomes. Back-translocation proceeds from a post-translocation (POST) complex to a pre-translocation (PRE) complex, thus giving elongation factor G a second chance to translocate the tRNAs correctly. Binds to ribosomes in a GTP-dependent manner. This Picosynechococcus sp. (strain ATCC 27264 / PCC 7002 / PR-6) (Agmenellum quadruplicatum) protein is Elongation factor 4.